The sequence spans 193 residues: Ion-translocating oxidoreductase complex subunit B (193 aa).

The tract at residues 1-26 is hydrophobic; sequence MSTMLIAVILLTLLALFFGVLLGFAA. In terms of domain architecture, 4Fe-4S spans 32 to 90; it reads EGNPIVDELEAILPQTQCGQCGYPGCRPYAEAIANGDKVNKCPPGGTATMEKLASLMGV. Positions 49, 52, 57, 73, 114, 117, 120, 124, 144, 147, 150, and 154 each coordinate [4Fe-4S] cluster. 2 4Fe-4S ferredoxin-type domains span residues 105–134 and 136–164; these read KVAY…GAGK and MHTV…MIPV.

This sequence belongs to the 4Fe4S bacterial-type ferredoxin family. RnfB subfamily. The complex is composed of six subunits: RnfA, RnfB, RnfC, RnfD, RnfE and RnfG. [4Fe-4S] cluster serves as cofactor.

Its subcellular location is the cell inner membrane. Functionally, part of a membrane-bound complex that couples electron transfer with translocation of ions across the membrane. This Shewanella sp. (strain MR-7) protein is Ion-translocating oxidoreductase complex subunit B.